Here is a 344-residue protein sequence, read N- to C-terminus: Holliday junction branch migration complex subunit RuvB (344 aa).

Residues 1–181 (MERIVTPAEM…FGVLCAMEYY (181 aa)) form a large ATPase domain (RuvB-L) region. ATP-binding positions include Leu20, Arg21, Gly62, Lys65, Thr66, Thr67, 128 to 130 (EDY), Arg171, Tyr181, and Arg218. Thr66 is a binding site for Mg(2+). Positions 182–252 (DENQLKEIVI…EAREALELLE (71 aa)) are small ATPAse domain (RuvB-S). Residues 255-344 (NQGFDKVDNK…SNKGQTSFFK (90 aa)) form a head domain (RuvB-H) region. The DNA site is built by Arg310 and Arg315.

It belongs to the RuvB family. Homohexamer. Forms an RuvA(8)-RuvB(12)-Holliday junction (HJ) complex. HJ DNA is sandwiched between 2 RuvA tetramers; dsDNA enters through RuvA and exits via RuvB. An RuvB hexamer assembles on each DNA strand where it exits the tetramer. Each RuvB hexamer is contacted by two RuvA subunits (via domain III) on 2 adjacent RuvB subunits; this complex drives branch migration. In the full resolvosome a probable DNA-RuvA(4)-RuvB(12)-RuvC(2) complex forms which resolves the HJ.

It is found in the cytoplasm. It carries out the reaction ATP + H2O = ADP + phosphate + H(+). Its function is as follows. The RuvA-RuvB-RuvC complex processes Holliday junction (HJ) DNA during genetic recombination and DNA repair, while the RuvA-RuvB complex plays an important role in the rescue of blocked DNA replication forks via replication fork reversal (RFR). RuvA specifically binds to HJ cruciform DNA, conferring on it an open structure. The RuvB hexamer acts as an ATP-dependent pump, pulling dsDNA into and through the RuvAB complex. RuvB forms 2 homohexamers on either side of HJ DNA bound by 1 or 2 RuvA tetramers; 4 subunits per hexamer contact DNA at a time. Coordinated motions by a converter formed by DNA-disengaged RuvB subunits stimulates ATP hydrolysis and nucleotide exchange. Immobilization of the converter enables RuvB to convert the ATP-contained energy into a lever motion, pulling 2 nucleotides of DNA out of the RuvA tetramer per ATP hydrolyzed, thus driving DNA branch migration. The RuvB motors rotate together with the DNA substrate, which together with the progressing nucleotide cycle form the mechanistic basis for DNA recombination by continuous HJ branch migration. Branch migration allows RuvC to scan DNA until it finds its consensus sequence, where it cleaves and resolves cruciform DNA. The polypeptide is Holliday junction branch migration complex subunit RuvB (Clostridium botulinum (strain Alaska E43 / Type E3)).